A 434-amino-acid chain; its full sequence is Serine--tRNA ligase (434 aa).

An L-serine-binding site is contributed by 241-243 (TAE). An ATP-binding site is contributed by 272-274 (RSE). An L-serine-binding site is contributed by glutamate 295. An ATP-binding site is contributed by 359 to 362 (EISS). Serine 395 is a binding site for L-serine.

Belongs to the class-II aminoacyl-tRNA synthetase family. Type-1 seryl-tRNA synthetase subfamily. In terms of assembly, homodimer. The tRNA molecule binds across the dimer.

The protein localises to the cytoplasm. The enzyme catalyses tRNA(Ser) + L-serine + ATP = L-seryl-tRNA(Ser) + AMP + diphosphate + H(+). It catalyses the reaction tRNA(Sec) + L-serine + ATP = L-seryl-tRNA(Sec) + AMP + diphosphate + H(+). It participates in aminoacyl-tRNA biosynthesis; selenocysteinyl-tRNA(Sec) biosynthesis; L-seryl-tRNA(Sec) from L-serine and tRNA(Sec): step 1/1. Its function is as follows. Catalyzes the attachment of serine to tRNA(Ser). Is also able to aminoacylate tRNA(Sec) with serine, to form the misacylated tRNA L-seryl-tRNA(Sec), which will be further converted into selenocysteinyl-tRNA(Sec). In Glaesserella parasuis serovar 5 (strain SH0165) (Haemophilus parasuis), this protein is Serine--tRNA ligase.